Here is a 351-residue protein sequence, read N- to C-terminus: DNA-directed RNA polymerase subunit alpha (351 aa).

The alpha N-terminal domain (alpha-NTD) stretch occupies residues 1-245; that stretch reads MPRRNLLKGF…EHFTVFVNFD (245 aa). The tract at residues 261 to 351 is alpha C-terminal domain (alpha-CTD); that stretch reads AVLELLNTKI…MRQKEEIDEA (91 aa).

The protein belongs to the RNA polymerase alpha chain family. In terms of assembly, homodimer. The RNAP catalytic core consists of 2 alpha, 1 beta, 1 beta' and 1 omega subunit. When a sigma factor is associated with the core the holoenzyme is formed, which can initiate transcription.

It catalyses the reaction RNA(n) + a ribonucleoside 5'-triphosphate = RNA(n+1) + diphosphate. Its function is as follows. DNA-dependent RNA polymerase catalyzes the transcription of DNA into RNA using the four ribonucleoside triphosphates as substrates. The sequence is that of DNA-directed RNA polymerase subunit alpha from Treponema pallidum (strain Nichols).